The chain runs to 638 residues: Gamma-aminobutyric acid receptor subunit theta (638 aa).

Residues 1 to 21 (MGIRGMLRAAALLLLIRTWLA) form the signal peptide. Residues 22–267 (ESNGPSPTPK…FQVQREVRSY (246 aa)) lie on the Extracellular side of the membrane. Residue N127 is glycosylated (N-linked (GlcNAc...) asparagine). A disulfide bridge links C183 with C197. The chain crosses the membrane as a helical span at residues 268–288 (LVQVYWPTVLTTILSWISFWM). The Cytoplasmic portion of the chain corresponds to 289 to 296 (NYDSSAAR). A helical membrane pass occupies residues 297–314 (VTIGLTSILVLTTIDSHM). The Extracellular segment spans residues 315–325 (RDKLPHISCIK). The chain crosses the membrane as a helical span at residues 326-346 (AIDIYILVCLFFVFLSLLEYV). Residues 347-617 (YINYLFFSQV…NRVPKVDRWS (271 aa)) lie on the Cytoplasmic side of the membrane. The disordered stretch occupies residues 491 to 515 (ACDDEDSEESLSSEESHGHGSSHTG). Positions 492 to 502 (CDDEDSEESLS) are enriched in acidic residues. The chain crosses the membrane as a helical span at residues 618 to 638 (RFLFPLSFGLFNVVYWLYHVY).

The protein belongs to the ligand-gated ion channel (TC 1.A.9) family. Gamma-aminobutyric acid receptor (TC 1.A.9.5) subfamily. GABRQ sub-subfamily. As to quaternary structure, heteropentamer, formed by a combination of alpha (GABRA1-6), beta (GABRB1-3), gamma (GABRG1-3), delta (GABRD), epsilon (GABRE), rho (GABRR1-3), pi (GABRP) and theta (GABRQ) chains, each subunit exhibiting distinct physiological and pharmacological properties. In terms of tissue distribution, expressed in brain, lung, and spleen.

Its subcellular location is the postsynaptic cell membrane. It is found in the cell membrane. The enzyme catalyses chloride(in) = chloride(out). Its activity is regulated as follows. Potentiated by etomidate, propofol, pregnanolone and pentobarbital. In terms of biological role, theta subunit of the heteropentameric ligand-gated chloride channel gated by gamma-aminobutyric acid (GABA), a major inhibitory neurotransmitter in the brain. GABA-gated chloride channels, also named GABA(A) receptors (GABAAR), consist of five subunits arranged around a central pore and contain GABA active binding site(s) located at the alpha and beta subunit interfaces. When activated by GABA, GABAARs selectively allow the flow of chloride anions across the cell membrane down their electrochemical gradient. This chain is Gamma-aminobutyric acid receptor subunit theta, found in Mus musculus (Mouse).